The chain runs to 373 residues: ORC1-type DNA replication protein 2 (373 aa).

Residues 63–67 (TGKTS), Y205, and R217 each bind ATP.

The protein belongs to the CDC6/cdc18 family.

Its function is as follows. Involved in regulation of DNA replication. The polypeptide is ORC1-type DNA replication protein 2 (cdc6-2) (Methanosarcina mazei (strain ATCC BAA-159 / DSM 3647 / Goe1 / Go1 / JCM 11833 / OCM 88) (Methanosarcina frisia)).